Consider the following 757-residue polypeptide: Mitofusin-2 (757 aa).

Over 1–604 (MSLLFSRCNS…TQEELMVSMV (604 aa)) the chain is Cytoplasmic. Residues 30–94 (KHFVTAKKKI…VRGISEVLAR (65 aa)) are part of a helix bundle domain, formed by helices from N-terminal and C-terminal regions. The Dynamin-type G domain occupies 93–342 (ARRHMKVAFF…VRMFEFQNFE (250 aa)). The segment at 103–110 (GRTSNGKS) is G1 motif. Residue 106 to 111 (SNGKST) coordinates GTP. Phosphothreonine; by PINK1 is present on T111. The segment at 129–130 (TT) is G2 motif. The tract at residues 199–202 (DSPG) is G3 motif. 258-261 (NRWD) lines the GTP pocket. The interval 258–261 (NRWD) is G4 motif. E288 is a region of interest (G5 motif). S305 and K307 together coordinate GTP. Positions 359-385 (EQHTVRAKQIAEAVRLIMDSLHIAAQE) are part of a helix bundle domain, formed by helices from N-terminal and C-terminal regions. The stretch at 406 to 435 (KQLELLAQDYKLRIKQMTEEVERQVSTAMA) forms a coiled coil. S442 carries the phosphoserine; by PINK1 modification. Residues 605 to 625 (TGLASLTSRTSMGILVVGGVV) form a helical membrane-spanning segment. Position 626 (W626) is a topological domain, mitochondrial intermembrane. Residues 627-647 (KAVGWRLIALSFGLYGLLYVY) traverse the membrane as a helical segment. Topologically, residues 648-757 (ERLTWTTRAK…FIHQYLQPSR (110 aa)) are cytoplasmic. Positions 696–738 (FAHLCQQVDITRDNLEQEIAAMNKKVEALDSLQSKAKLLRNKA) form a coiled coil. The part of a helix bundle domain, formed by helices from N-terminal and C-terminal regions stretch occupies residues 722–753 (EALDSLQSKAKLLRNKAGWLDSELNMFIHQYL).

The protein belongs to the TRAFAC class dynamin-like GTPase superfamily. Dynamin/Fzo/YdjA family. Mitofusin subfamily. Forms homomultimers and heteromultimers with MFN1. Oligomerization is essential for mitochondrion fusion. Interacts with VAT1. Interacts with STOML2; may form heterooligomers. Interacts (phosphorylated) with PRKN. Interacts with EIF2AK3. Interacts with THG1L; THG1L probably functions as a guanyl-nucleotide exchange factor/GEF, activating MFN2. Post-translationally, phosphorylated by PINK1. In terms of processing, ubiquitinated by non-degradative ubiquitin by PRKN, promoting mitochondrial fusion; deubiquitination by USP30 inhibits mitochondrial fusion. Ubiquitinated by HUWE1 when dietary stearate (C18:0) levels are low; ubiquitination inhibits mitochondrial fusion. As to expression, ubiquitous. In brain, it is more expressed than MFN1, while it is expressed at a weaker level than MFN1 in heart and testis. Expressed at high level in elongating spermatids of seminiferous tubules. Expression is markedly down-regulated in highly proliferative vascular smooth muscle cells (VSMCs) from the genetic hypertensive animal model SHR, as well as in balloon-injured Wistar Kyoto arteries.

Its subcellular location is the mitochondrion outer membrane. The catalysed reaction is GTP + H2O = GDP + phosphate + H(+). Functionally, mitochondrial outer membrane GTPase that mediates mitochondrial clustering and fusion. Mitochondria are highly dynamic organelles, and their morphology is determined by the equilibrium between mitochondrial fusion and fission events. Overexpression induces the formation of mitochondrial networks. Membrane clustering requires GTPase activity and may involve a major rearrangement of the coiled coil domains. Plays a central role in mitochondrial metabolism and may be associated with obesity and/or apoptosis processes. Plays an important role in the regulation of vascular smooth muscle cell proliferation. Involved in the clearance of damaged mitochondria via selective autophagy (mitophagy). Is required for PRKN recruitment to dysfunctional mitochondria. Involved in the control of unfolded protein response (UPR) upon ER stress including activation of apoptosis and autophagy during ER stress. Acts as an upstream regulator of EIF2AK3 and suppresses EIF2AK3 activation under basal conditions. The polypeptide is Mitofusin-2 (Mfn2) (Rattus norvegicus (Rat)).